The chain runs to 1033 residues: Translation initiation factor IF-2 (1033 aa).

The disordered stretch occupies residues alanine 49–proline 432. A compositionally biased stretch (low complexity) spans serine 59–alanine 113. Pro residues-rich tracts occupy residues proline 114–alanine 140 and proline 148–proline 164. Over residues proline 171–glycine 189 the composition is skewed to low complexity. The span at glutamine 190–arginine 201 shows a compositional bias: gly residues. The span at alanine 236–glycine 246 shows a compositional bias: pro residues. The span at glycine 247–proline 268 shows a compositional bias: gly residues. Residues methionine 305–proline 314 are compositionally biased toward low complexity. A compositionally biased stretch (gly residues) spans proline 318–glycine 401. Residues arginine 405–arginine 414 show a composition bias toward basic residues. The region spanning valine 526 to aspartate 698 is the tr-type G domain. Positions glycine 535–threonine 542 are G1. Glycine 535–threonine 542 contacts GTP. Positions glycine 560–histidine 564 are G2. Residues aspartate 585–glycine 588 are G3. Residues aspartate 585–histidine 589 and asparagine 639–aspartate 642 contribute to the GTP site. Positions asparagine 639 to aspartate 642 are G4. Residues serine 675–lysine 677 form a G5 region.

The protein belongs to the TRAFAC class translation factor GTPase superfamily. Classic translation factor GTPase family. IF-2 subfamily.

The protein resides in the cytoplasm. Functionally, one of the essential components for the initiation of protein synthesis. Protects formylmethionyl-tRNA from spontaneous hydrolysis and promotes its binding to the 30S ribosomal subunits. Also involved in the hydrolysis of GTP during the formation of the 70S ribosomal complex. In Streptomyces coelicolor (strain ATCC BAA-471 / A3(2) / M145), this protein is Translation initiation factor IF-2.